The chain runs to 289 residues: Ribonuclease HII (289 aa).

A disordered region spans residues 1–55 (MIRDQAKTPGRAKSAAAAKASPAAKGGGNEAAQSAAGKAAAKPAAKPATSKSGKG). 2 stretches are compositionally biased toward low complexity: residues 7-24 (KTPG…SPAA) and 31-55 (AAQS…SGKG). An RNase H type-2 domain is found at 76–264 (WPVAGCDEAG…VVAARRKHQP (189 aa)). 3 residues coordinate a divalent metal cation: Asp-82, Glu-83, and Asp-173.

Belongs to the RNase HII family. Requires Mn(2+) as cofactor. It depends on Mg(2+) as a cofactor.

Its subcellular location is the cytoplasm. It carries out the reaction Endonucleolytic cleavage to 5'-phosphomonoester.. Functionally, endonuclease that specifically degrades the RNA of RNA-DNA hybrids. The polypeptide is Ribonuclease HII (Bradyrhizobium sp. (strain BTAi1 / ATCC BAA-1182)).